The chain runs to 1007 residues: Bifunctional glutamine synthetase adenylyltransferase/adenylyl-removing enzyme (1007 aa).

Residues methionine 1 to leucine 496 are adenylyl removase. Positions asparagine 505–alanine 1007 are adenylyl transferase.

It belongs to the GlnE family. It depends on Mg(2+) as a cofactor.

The enzyme catalyses [glutamine synthetase]-O(4)-(5'-adenylyl)-L-tyrosine + phosphate = [glutamine synthetase]-L-tyrosine + ADP. The catalysed reaction is [glutamine synthetase]-L-tyrosine + ATP = [glutamine synthetase]-O(4)-(5'-adenylyl)-L-tyrosine + diphosphate. In terms of biological role, involved in the regulation of glutamine synthetase GlnA, a key enzyme in the process to assimilate ammonia. When cellular nitrogen levels are high, the C-terminal adenylyl transferase (AT) inactivates GlnA by covalent transfer of an adenylyl group from ATP to specific tyrosine residue of GlnA, thus reducing its activity. Conversely, when nitrogen levels are low, the N-terminal adenylyl removase (AR) activates GlnA by removing the adenylyl group by phosphorolysis, increasing its activity. The regulatory region of GlnE binds the signal transduction protein PII (GlnB) which indicates the nitrogen status of the cell. This chain is Bifunctional glutamine synthetase adenylyltransferase/adenylyl-removing enzyme, found in Leifsonia xyli subsp. xyli (strain CTCB07).